The primary structure comprises 247 residues: tRNA pseudouridine synthase A (247 aa).

The Nucleophile role is filled by Asp52. Substrate is bound at residue Tyr113.

The protein belongs to the tRNA pseudouridine synthase TruA family. In terms of assembly, homodimer.

The enzyme catalyses uridine(38/39/40) in tRNA = pseudouridine(38/39/40) in tRNA. In terms of biological role, formation of pseudouridine at positions 38, 39 and 40 in the anticodon stem and loop of transfer RNAs. This is tRNA pseudouridine synthase A from Bartonella henselae (strain ATCC 49882 / DSM 28221 / CCUG 30454 / Houston 1) (Rochalimaea henselae).